The following is a 529-amino-acid chain: Extracellular signal-regulated kinase 1 (529 aa).

2 disordered regions span residues 1–20 (MEPE…THQS) and 100–131 (QQNQ…SNFN). Residues 8–20 (FQSQMDSDNTHQS) show a composition bias toward polar residues. Residues 100–117 (QQNQQQQSQQMTQQQLQQ) are compositionally biased toward low complexity. The region spanning 149–439 (YSIVKCIGHG…EALAHPYFQS (291 aa)) is the Protein kinase domain. Residues 155–163 (IGHGAYGVV) and Lys178 contribute to the ATP site. The Proton acceptor role is filled by Asp275. The residue at position 309 (Thr309) is a Phosphothreonine. A TXY motif is present at residues 309–311 (TEY). Tyr311 is subject to Phosphotyrosine.

Belongs to the protein kinase superfamily. CMGC Ser/Thr protein kinase family. MAP kinase subfamily. Mg(2+) serves as cofactor. Post-translationally, dually phosphorylated on Thr-309 and Tyr-311, which activates the enzyme.

The enzyme catalyses L-seryl-[protein] + ATP = O-phospho-L-seryl-[protein] + ADP + H(+). The catalysed reaction is L-threonyl-[protein] + ATP = O-phospho-L-threonyl-[protein] + ADP + H(+). With respect to regulation, activated by tyrosine and threonine phosphorylation. In terms of biological role, kinase involved in a signal transduction pathway. The chain is Extracellular signal-regulated kinase 1 (erkA) from Dictyostelium discoideum (Social amoeba).